A 350-amino-acid polypeptide reads, in one-letter code: Sulfate-binding protein (350 aa).

A signal peptide spans 1–40; sequence MKTAWTRRSFLQSAALATATVITIAACGGNNQSSSGGSGQ.

The protein belongs to the prokaryotic sulfate-binding protein family.

It is found in the periplasm. Functionally, this protein specifically binds sulfate and is involved in its transmembrane transport. This chain is Sulfate-binding protein (sbpA), found in Synechococcus elongatus (strain ATCC 33912 / PCC 7942 / FACHB-805) (Anacystis nidulans R2).